A 299-amino-acid polypeptide reads, in one-letter code: Oxygen-dependent coproporphyrinogen-III oxidase (299 aa).

Ser-92 provides a ligand contact to substrate. Mn(2+) contacts are provided by His-96 and His-106. His-106 functions as the Proton donor in the catalytic mechanism. Asn-108 to Arg-110 is a substrate binding site. Mn(2+)-binding residues include His-145 and His-175. The tract at residues Tyr-240–Glu-275 is important for dimerization. Gly-258–Arg-260 is a binding site for substrate.

Belongs to the aerobic coproporphyrinogen-III oxidase family. In terms of assembly, homodimer. Requires Mn(2+) as cofactor.

It is found in the cytoplasm. The enzyme catalyses coproporphyrinogen III + O2 + 2 H(+) = protoporphyrinogen IX + 2 CO2 + 2 H2O. Its pathway is porphyrin-containing compound metabolism; protoporphyrin-IX biosynthesis; protoporphyrinogen-IX from coproporphyrinogen-III (O2 route): step 1/1. Its function is as follows. Involved in the heme biosynthesis. Catalyzes the aerobic oxidative decarboxylation of propionate groups of rings A and B of coproporphyrinogen-III to yield the vinyl groups in protoporphyrinogen-IX. In Escherichia coli (strain SMS-3-5 / SECEC), this protein is Oxygen-dependent coproporphyrinogen-III oxidase.